Here is a 384-residue protein sequence, read N- to C-terminus: PqqA peptide cyclase (384 aa).

The Radical SAM core domain occupies 14–226 (IPAPVGLLAE…IRIVEAARER (213 aa)). [4Fe-4S] cluster contacts are provided by C28, C32, and C35.

The protein belongs to the radical SAM superfamily. PqqE family. As to quaternary structure, interacts with PqqD. The interaction is necessary for activity of PqqE. Requires [4Fe-4S] cluster as cofactor.

It catalyses the reaction [PQQ precursor protein] + S-adenosyl-L-methionine = E-Y cross-linked-[PQQ precursor protein] + 5'-deoxyadenosine + L-methionine + H(+). Its pathway is cofactor biosynthesis; pyrroloquinoline quinone biosynthesis. Functionally, catalyzes the cross-linking of a glutamate residue and a tyrosine residue in the PqqA protein as part of the biosynthesis of pyrroloquinoline quinone (PQQ). In Methylorubrum populi (strain ATCC BAA-705 / NCIMB 13946 / BJ001) (Methylobacterium populi), this protein is PqqA peptide cyclase.